The primary structure comprises 256 residues: UPF0259 membrane protein YPO2199/y2042/YP_1997 (256 aa).

The next 6 membrane-spanning stretches (helical) occupy residues Ile-20 to Thr-40, Phe-90 to Val-110, Ala-118 to Ile-138, Leu-141 to Leu-161, Leu-192 to Ser-212, and Ile-221 to Leu-241.

Belongs to the UPF0259 family.

Its subcellular location is the cell inner membrane. This is UPF0259 membrane protein YPO2199/y2042/YP_1997 from Yersinia pestis.